Consider the following 146-residue polypeptide: D-aminoacyl-tRNA deacylase (146 aa).

The Gly-cisPro motif, important for rejection of L-amino acids motif lies at 138-139 (GP).

The protein belongs to the DTD family. Homodimer.

It is found in the cytoplasm. The catalysed reaction is glycyl-tRNA(Ala) + H2O = tRNA(Ala) + glycine + H(+). It catalyses the reaction a D-aminoacyl-tRNA + H2O = a tRNA + a D-alpha-amino acid + H(+). Its function is as follows. An aminoacyl-tRNA editing enzyme that deacylates mischarged D-aminoacyl-tRNAs. Also deacylates mischarged glycyl-tRNA(Ala), protecting cells against glycine mischarging by AlaRS. Acts via tRNA-based rather than protein-based catalysis; rejects L-amino acids rather than detecting D-amino acids in the active site. By recycling D-aminoacyl-tRNA to D-amino acids and free tRNA molecules, this enzyme counteracts the toxicity associated with the formation of D-aminoacyl-tRNA entities in vivo and helps enforce protein L-homochirality. This Stenotrophomonas maltophilia (strain K279a) protein is D-aminoacyl-tRNA deacylase.